The sequence spans 164 residues: 2-C-methyl-D-erythritol 2,4-cyclodiphosphate synthase (164 aa).

Residues aspartate 9 and histidine 11 each coordinate a divalent metal cation. Residues 9-11 (DVH) and 35-36 (HS) each bind 4-CDP-2-C-methyl-D-erythritol 2-phosphate. Histidine 43 is a binding site for a divalent metal cation. 4-CDP-2-C-methyl-D-erythritol 2-phosphate-binding positions include 57–59 (DIG), 62–66 (FPDTD), 133–136 (TTTE), phenylalanine 140, and arginine 143.

The protein belongs to the IspF family. Homotrimer. Requires a divalent metal cation as cofactor.

It catalyses the reaction 4-CDP-2-C-methyl-D-erythritol 2-phosphate = 2-C-methyl-D-erythritol 2,4-cyclic diphosphate + CMP. It participates in isoprenoid biosynthesis; isopentenyl diphosphate biosynthesis via DXP pathway; isopentenyl diphosphate from 1-deoxy-D-xylulose 5-phosphate: step 4/6. Its function is as follows. Involved in the biosynthesis of isopentenyl diphosphate (IPP) and dimethylallyl diphosphate (DMAPP), two major building blocks of isoprenoid compounds. Catalyzes the conversion of 4-diphosphocytidyl-2-C-methyl-D-erythritol 2-phosphate (CDP-ME2P) to 2-C-methyl-D-erythritol 2,4-cyclodiphosphate (ME-CPP) with a corresponding release of cytidine 5-monophosphate (CMP). The polypeptide is 2-C-methyl-D-erythritol 2,4-cyclodiphosphate synthase (Syntrophotalea carbinolica (strain DSM 2380 / NBRC 103641 / GraBd1) (Pelobacter carbinolicus)).